Consider the following 149-residue polypeptide: Ribonuclease H (149 aa).

An RNase H type-1 domain is found at 5 to 146; sequence QRPHVVIFTD…ADELAREGLA (142 aa). Mg(2+)-binding residues include D14, E52, D74, and D138.

It belongs to the RNase H family. Monomer. Requires Mg(2+) as cofactor.

It localises to the cytoplasm. It carries out the reaction Endonucleolytic cleavage to 5'-phosphomonoester.. Functionally, endonuclease that specifically degrades the RNA of RNA-DNA hybrids. The protein is Ribonuclease H of Afipia carboxidovorans (strain ATCC 49405 / DSM 1227 / KCTC 32145 / OM5) (Oligotropha carboxidovorans).